Reading from the N-terminus, the 1857-residue chain is U3 small nucleolar RNA-associated protein 10 (1857 aa).

Residues 267–287 (LTAYSIISVLSSLVPLSADLV) traverse the membrane as a helical segment. The stretch at 1817–1855 (LIPYIAELLEDDDEEVELEVRNGLVRVIENVLGEPLDRY) is one HEAT repeat.

Belongs to the HEATR1/UTP10 family. In terms of assembly, component of the ribosomal small subunit (SSU) processome.

It is found in the nucleus. The protein localises to the nucleolus. Its subcellular location is the membrane. Its function is as follows. Involved in nucleolar processing of pre-18S ribosomal RNA. Involved in ribosome biosynthesis. The polypeptide is U3 small nucleolar RNA-associated protein 10 (Debaryomyces hansenii (strain ATCC 36239 / CBS 767 / BCRC 21394 / JCM 1990 / NBRC 0083 / IGC 2968) (Yeast)).